The following is a 461-amino-acid chain: Aldehyde dehydrogenase LUC3 (461 aa).

Position 215–220 (215–220) interacts with NAD(+); sequence GSTATG. Active-site residues include E237 and C271.

The protein belongs to the aldehyde dehydrogenase family.

It carries out the reaction an aldehyde + NAD(+) + H2O = a carboxylate + NADH + 2 H(+). Its pathway is mycotoxin biosynthesis. Aldehyde dehydrogenase; part of the gene cluster that mediates the biosynthesis of the mycotoxin lucilactaene and the lucilactaene-related compound NG-391 that act as cell cycle inhibitors with potent growth inhibitory activity against malarial parasites, moderate growth inhibitory activity against cancer cells, and no activity against bacteria and fungi. LUC3 is important for lucilactaene biosynthesis and performs the oxidation of the C-20 alcoholic analog prelucilactaene G into a carboxylic derivative that has still to be identified. The pathway begins with the hybrid PKS-NRPS synthetase LUC5 which is responsible for the condensation of one acetyl-coenzyme A (CoA) unit with six malonyl-CoA units and the amide linkage of the arising heptaketide and homoserine, subsequently releasing the first intermediate prelucilactaene B. Both the cytochrome P450 monooxygenase LUC2 and the hydrolase LUC6 function in parallel in modification of prelucilactaene B. LUC6 may catalyze the 2-pyrrolidone ring formation to form prelucilactaene C from prelucilactaene B, followed by C-15 hydroxylation by the same enzyme to give prelucilactaene D, which is then converted to prelucilactaene E by epoxidation, and finally to prelucilactaene F by cyclization. Prelucilactane D, prelucilactaene E, and prelucilactaene F can be converted to dihydrolucilactaene, NG391, and lucilactaene, respectively, via C-20 methyl group hydroxylation by the cytochrome P450 monooxygenase LUC2. However, LUC2, unlike FUS8 in fusarin C biosynthesis, is not enough for the full oxidation of the C-20 methyl group into carboxylic acid, which is a prerequisite for the final methylation step. The aldehyde dehydrogenase LUC3 is involved in the biosynthesis by further oxidation of the C-20 alcoholic analog prelucilactaene G into a carboxylic derivative. This unidentified carboxylic derivative may be converted to demethyllucilactaene. As the last step, the methyltransferase LUC1 methylates the hydroxyl group at C-21 of demethyllucilactaene to generate lucilactaene. The chain is Aldehyde dehydrogenase LUC3 from Fusarium sp.